Consider the following 539-residue polypeptide: Chaperonin GroEL (539 aa).

ATP is bound by residues T29–P32, D86–T90, G412, N475–A477, and D491.

It belongs to the chaperonin (HSP60) family. As to quaternary structure, forms a cylinder of 14 subunits composed of two heptameric rings stacked back-to-back. Interacts with the co-chaperonin GroES.

Its subcellular location is the cytoplasm. The enzyme catalyses ATP + H2O + a folded polypeptide = ADP + phosphate + an unfolded polypeptide.. Together with its co-chaperonin GroES, plays an essential role in assisting protein folding. The GroEL-GroES system forms a nano-cage that allows encapsulation of the non-native substrate proteins and provides a physical environment optimized to promote and accelerate protein folding. The protein is Chaperonin GroEL of Tsukamurella tyrosinosolvens.